The chain runs to 336 residues: Serpentine receptor class beta-15 (336 aa).

7 consecutive transmembrane segments (helical) span residues 24-44, 57-77, 109-129, 142-162, 186-206, 237-257, and 276-296; these read LFIH…FVIF, FLFS…AIIS, IFMS…FIAM, LGPI…FFIY, FTFF…NSYL, VFVV…IMIL, and GAFT…AVYL.

The protein belongs to the nematode receptor-like protein srb family.

Its subcellular location is the membrane. The protein is Serpentine receptor class beta-15 (srb-15) of Caenorhabditis elegans.